Reading from the N-terminus, the 100-residue chain is uncharacterized protein (100 aa).

The N-terminal stretch at 1-17 (MTMKYFCSVMIAIALVG) is a signal peptide. Cys-18 is lipidated: N-palmitoyl cysteine. Cys-18 is lipidated: S-diacylglycerol cysteine.

It is found in the cell membrane. This is an uncharacterized protein from Salmonella paratyphi A (strain ATCC 9150 / SARB42).